Reading from the N-terminus, the 63-residue chain is DNA-directed RNA polymerase 7 kDa subunit (63 aa).

The protein belongs to the poxviridae DNA-directed RNA polymerase 7 kDa subunit family. As to quaternary structure, the DNA-dependent RNA polymerase used for intermediate and late genes expression consists of eight subunits 147 kDa, 133 kDa, 35 kDa, 30 kDa, 22 kDa, 19 kDa, 18 kDa and 7 kDa totalling more than 500 kDa in mass. The same holoenzyme, with the addition of the transcription-specificity factor RAP94, is used for early gene expression.

Its subcellular location is the virion. It catalyses the reaction RNA(n) + a ribonucleoside 5'-triphosphate = RNA(n+1) + diphosphate. Part of the DNA-dependent RNA polymerase which catalyzes the transcription of viral DNA into RNA using the four ribonucleoside triphosphates as substrates. Responsible for the transcription of early, intermediate and late genes. DNA-dependent RNA polymerase associates with the early transcription factor (ETF) thereby allowing the early genes transcription. Late transcription, and probably also intermediate transcription, require newly synthesized RNA polymerase. The protein is DNA-directed RNA polymerase 7 kDa subunit (RPO7) of Rabbit fibroma virus (strain Kasza) (RFV).